A 608-amino-acid chain; its full sequence is ATP-citrate synthase beta chain protein 1 (608 aa).

ATP-binding positions include 214–234 and 265–291; these read ILRFNNIPQVKMMVVLGELGG and FKSEVQFGHAGAKSGGELESAQAKNQA. Glutamate 231 serves as a coordination point for Mg(2+). Residue histidine 273 is the Tele-phosphohistidine intermediate of the active site. Residue 292 to 302 coordinates CoA; it reads LKDAGAVVPTS.

The protein belongs to the succinate/malate CoA ligase alpha subunit family. As to quaternary structure, heterooctamer of 4 alpha and 4 beta chains.

The protein localises to the cytoplasm. Its subcellular location is the cytosol. It catalyses the reaction oxaloacetate + acetyl-CoA + ADP + phosphate = citrate + ATP + CoA. In terms of biological role, ATP citrate-lyase is the primary enzyme responsible for the synthesis of cytosolic acetyl-CoA, used for the elongation of fatty acids and biosynthesis of isoprenoids, flavonoids and malonated derivatives. May supply substrate to the cytosolic acetyl-CoA carboxylase, which generates the malonyl-CoA used for the synthesis of a multitude of compounds, including very long chain fatty acids and flavonoids. In contrast to all known animal ACL enzymes having a homomeric structure, plant ACLs are composed of alpha and beta chains. This chain is ATP-citrate synthase beta chain protein 1 (ACLB-1), found in Oryza sativa subsp. japonica (Rice).